Consider the following 1522-residue polypeptide: Paired amphipathic helix protein pst1 (1522 aa).

The segment at 139–174 is disordered; it reads TILSSTDSNIPRPGTVKSSASPFVPNQNPSAPPPPP. A PAH 1 domain is found at 178–248; the sequence is RQLNVTDALS…QGFNTFLPPG (71 aa). A disordered region spans residues 307–339; sequence QSSASHPVLQPPAPSTLQFNPSPSPAAPSYPPV. Positions 328–337 are enriched in pro residues; sequence SPSPAAPSYP. Residues 345–415 enclose the PAH 2 domain; it reads QAADLDQAIN…EEFKRFLPDV (71 aa). Disordered stretches follow at residues 422 to 504, 928 to 968, and 1343 to 1522; these read ETQD…AFNV, AREN…DESS, and SGKA…KDDL. The segment covering 426–441 has biased composition (polar residues); that stretch reads KSTVVPQESATATPKR. The residue at position 442 (S442) is a Phosphoserine. Positions 442 to 468 are enriched in low complexity; sequence SPSATPTSALPPIGKFAPPTTAKAQPA. Phosphothreonine is present on T446. A PAH 3 domain is found at 504–576; that stretch reads VPIAQNKNPS…NWLKDLVKYN (73 aa). Positions 928-960 are enriched in basic and acidic residues; sequence ARENRSSVKEDYVSESTERTPDASEIDEHISEH. Residues 1385 to 1398 are compositionally biased toward polar residues; the sequence is GKSSVTRGNKTNLK. The span at 1403 to 1432 shows a compositional bias: basic and acidic residues; sequence RNNDDSSNKINLSEKEKEKESIEDEEKNRE. S1443 is subject to Phosphoserine. Residues 1461-1474 are compositionally biased toward basic and acidic residues; it reads TSSHRPERSSEKKS. Residues 1478–1487 are compositionally biased toward polar residues; that stretch reads VFTSVKQTAE. Over residues 1488 to 1522 the composition is skewed to acidic residues; sequence NDADNEDDKTDMDDQTEETLDADNTMEEEPSKDDL.

It localises to the nucleus. Has a role in modulating the nuclear import of TF1 virus-like particles. Essential for viability. The protein is Paired amphipathic helix protein pst1 (pst1) of Schizosaccharomyces pombe (strain 972 / ATCC 24843) (Fission yeast).